The primary structure comprises 222 residues: Protein GrpE (222 aa).

A disordered region spans residues 1–21; sequence MSDEKNKFTDASFENCDLKNP.

This sequence belongs to the GrpE family. As to quaternary structure, homodimer.

The protein localises to the cytoplasm. Functionally, participates actively in the response to hyperosmotic and heat shock by preventing the aggregation of stress-denatured proteins, in association with DnaK and GrpE. It is the nucleotide exchange factor for DnaK and may function as a thermosensor. Unfolded proteins bind initially to DnaJ; upon interaction with the DnaJ-bound protein, DnaK hydrolyzes its bound ATP, resulting in the formation of a stable complex. GrpE releases ADP from DnaK; ATP binding to DnaK triggers the release of the substrate protein, thus completing the reaction cycle. Several rounds of ATP-dependent interactions between DnaJ, DnaK and GrpE are required for fully efficient folding. The chain is Protein GrpE from Bartonella tribocorum (strain CIP 105476 / IBS 506).